Consider the following 253-residue polypeptide: Ubiquinone biosynthesis O-methyltransferase (253 aa).

Arg47, Gly78, Asp99, and Met141 together coordinate S-adenosyl-L-methionine.

This sequence belongs to the methyltransferase superfamily. UbiG/COQ3 family.

The enzyme catalyses a 3-demethylubiquinol + S-adenosyl-L-methionine = a ubiquinol + S-adenosyl-L-homocysteine + H(+). It carries out the reaction a 3-(all-trans-polyprenyl)benzene-1,2-diol + S-adenosyl-L-methionine = a 2-methoxy-6-(all-trans-polyprenyl)phenol + S-adenosyl-L-homocysteine + H(+). It functions in the pathway cofactor biosynthesis; ubiquinone biosynthesis. Functionally, O-methyltransferase that catalyzes the 2 O-methylation steps in the ubiquinone biosynthetic pathway. This Bradyrhizobium diazoefficiens (strain JCM 10833 / BCRC 13528 / IAM 13628 / NBRC 14792 / USDA 110) protein is Ubiquinone biosynthesis O-methyltransferase.